We begin with the raw amino-acid sequence, 296 residues long: dTDP-4-dehydrorhamnose reductase (296 aa).

NADH is bound by residues 10-12, 35-36, and 59-61; these read GQI, DL, and AYT. Residues 11–12, 35–36, and 59–61 each bind NADPH; these read QI, DL, and AYT. Residue 100-101 participates in dTDP-beta-L-rhamnose binding; it reads TD. NADH is bound by residues Tyr-124 and Lys-128. Positions 124 and 128 each coordinate NADPH. Residue Tyr-124 is the Proton donor/acceptor of the active site. A dTDP-beta-L-rhamnose-binding site is contributed by Trp-149.

The protein belongs to the dTDP-4-dehydrorhamnose reductase family. As to quaternary structure, homodimer. It depends on Mg(2+) as a cofactor.

It catalyses the reaction dTDP-beta-L-rhamnose + NADP(+) = dTDP-4-dehydro-beta-L-rhamnose + NADPH + H(+). It participates in carbohydrate biosynthesis; dTDP-L-rhamnose biosynthesis. In terms of biological role, involved in the biosynthesis of the dTDP-L-rhamnose which is an important component of lipopolysaccharide (LPS). Catalyzes the reduction of dTDP-6-deoxy-L-lyxo-4-hexulose to yield dTDP-L-rhamnose. RmlD uses NADH and NADPH nearly equally well. This chain is dTDP-4-dehydrorhamnose reductase, found in Sinorhizobium fredii (strain NBRC 101917 / NGR234).